A 309-amino-acid chain; its full sequence is Low density lipoprotein receptor adapter protein 1-B (309 aa).

One can recognise a PID domain in the interval 41–195 (LLEGMLFHLK…SDGEGASSSQ (155 aa)). The segment at 179–201 (DKREKSGSDGEGASSSQSDGSSS) is disordered. Positions 189 to 201 (EGASSSQSDGSSS) are enriched in low complexity. A Clathrin box motif is present at residues 213-217 (LLDFE). Residues 250–277 (WELDDGLDEAFARLAESRTNPQVLDIGL) form an AP-2 complex binding region. The short motif at 258-267 (EAFARLAESR) is the [DE]-X(1,2)-F-X-X-[FL]-X-X-X-R motif element.

In terms of assembly, interacts (via PID domain) with ldlr (via NPXY motif). Binds to soluble clathrin trimers and to the adapter protein complex 2 (AP-2, beta 2 subunit). Binds to phosphoinositides, which regulate clathrin bud assembly at the cell surface. Interacts with the VLDL receptor (vldlr). Interacts with the vitellogenin receptor. Expressed at high level during oogenesis and embryogenesis. Found at low level in the adult liver and spleen. Found at very low level in testis and heart. Not found in the oocyte vegetal cortex.

It localises to the cytoplasm. Its function is as follows. Adapter protein (clathrin-associated sorting protein (CLASP)) required for efficient endocytosis of the LDL receptor (LDLR). Also involved in the vitellogenin receptor mediated endocytosis of nutrients during oogenesis. The protein is Low density lipoprotein receptor adapter protein 1-B of Xenopus laevis (African clawed frog).